The following is a 345-amino-acid chain: MADRIHWTVGLAQTLFDKPLLELLFEAQTVHRQHFDPRQVQVSTLLSIKTGACPEDCKYCPQSSRYKTGLESERLMQVEQVLESARKAKANGSTRFCMGAAWKNPHERDMPYLQQMVQGVKAMGMETCMTLGTLDGTQAERLADAGLDYYNHNLDTSPEFYGNIITTRSYQERLDTLGKVRGAGIKVCSGGIVGLGETVRDRAGLLVQLANLPTPPESVPINMLVKVKGTPLADNEDVDPFDFIRTIAVARIMMPASYVRLSAGREQMNEQTQAMCFMAGANSIFYGCKLLTTPNPEEDKDLQLFRKLGLNPQQTETEHGDNQQQQALAAQLMQADTAEFYNAAL.

Residues 38–256 enclose the Radical SAM core domain; sequence RQVQVSTLLS…IAVARIMMPA (219 aa). Positions 53, 57, and 60 each coordinate [4Fe-4S] cluster. [2Fe-2S] cluster-binding residues include Cys97, Cys128, Cys188, and Arg260.

This sequence belongs to the radical SAM superfamily. Biotin synthase family. Homodimer. The cofactor is [4Fe-4S] cluster. It depends on [2Fe-2S] cluster as a cofactor.

It catalyses the reaction (4R,5S)-dethiobiotin + (sulfur carrier)-SH + 2 reduced [2Fe-2S]-[ferredoxin] + 2 S-adenosyl-L-methionine = (sulfur carrier)-H + biotin + 2 5'-deoxyadenosine + 2 L-methionine + 2 oxidized [2Fe-2S]-[ferredoxin]. The protein operates within cofactor biosynthesis; biotin biosynthesis; biotin from 7,8-diaminononanoate: step 2/2. Functionally, catalyzes the conversion of dethiobiotin (DTB) to biotin by the insertion of a sulfur atom into dethiobiotin via a radical-based mechanism. The polypeptide is Biotin synthase (Serratia proteamaculans (strain 568)).